The following is a 192-amino-acid chain: BREX protein BrxB (192 aa).

The protein belongs to the BrxB family.

In terms of biological role, BREX systems (bacteriophage exclusion) provide immunity against bacteriophage. Part of a type 1 BREX system. This system allows phage adsorption but prevents phage DNA replication, without degradation of the phage DNA. Methylation of bacterial DNA by PglX probably guides self/non-self discrimination. When the brxA-brxB-brxC-pglX and pglZ-brxL operons are transformed into a susceptible B.subtilis strain (BEST7003) they confer resistance to bacteriophages SPbeta, SP16, Zeta, phi3T and SP02 and partial protection to phages SP01 and SP82G (these include lytic and temperate phage). They do not protect against phages phi105, rho10 or rho14. Additionally confers a very slight reduction in efficiency of plasmid transformation. The chain is BREX protein BrxB from Bacillus cereus (strain H3081.97).